Consider the following 606-residue polypeptide: Dihydroxy-acid dehydratase ilvC, mitochondrial (606 aa).

Cys84 provides a ligand contact to [2Fe-2S] cluster. Asp116 contributes to the Mg(2+) binding site. Cys157 is a [2Fe-2S] cluster binding site. Asp158 is a binding site for Mg(2+). Cys232 serves as a coordination point for [2Fe-2S] cluster. A Mg(2+)-binding site is contributed by Glu485. The active-site Proton acceptor is the Ser511.

It belongs to the IlvD/Edd family. It depends on [2Fe-2S] cluster as a cofactor. Mg(2+) serves as cofactor.

It localises to the mitochondrion. The enzyme catalyses (2R)-2,3-dihydroxy-3-methylbutanoate = 3-methyl-2-oxobutanoate + H2O. The catalysed reaction is (2R,3R)-2,3-dihydroxy-3-methylpentanoate = (S)-3-methyl-2-oxopentanoate + H2O. Its pathway is amino-acid biosynthesis; L-isoleucine biosynthesis; L-isoleucine from 2-oxobutanoate: step 3/4. The protein operates within amino-acid biosynthesis; L-valine biosynthesis; L-valine from pyruvate: step 3/4. With respect to regulation, DHAD activity is inhibited in dose-dependent manner by 2-hydroxy-3-methylbutyric acid with an IC(50) of about 8 mM. Functionally, dihydroxyacid dehydratase that catalyzes the third step in the common pathway leading to biosynthesis of branched-chain amino acids. Catalyzes the dehydration of (2R,3R)-2,3-dihydroxy-3-methylpentanoate (2,3-dihydroxy-3-methylvalerate) into 2-oxo-3-methylpentanoate (2-oxo-3-methylvalerate) and of (2R)-2,3-dihydroxy-3-methylbutanoate (2,3-dihydroxyisovalerate) into 2-oxo-3-methylbutanoate (2-oxoisovalerate), the penultimate precursor to L-isoleucine and L-valine, respectively. IlvC and the branched-chain amino acid biosynthesis are crucial for virulence and may be a potential target to develop antifungal agents. The protein is Dihydroxy-acid dehydratase ilvC, mitochondrial of Aspergillus fumigatus (strain ATCC MYA-4609 / CBS 101355 / FGSC A1100 / Af293) (Neosartorya fumigata).